We begin with the raw amino-acid sequence, 528 residues long: G patch domain-containing protein 2 (528 aa).

Positions 36–119 are disordered; that stretch reads LEESSEQARG…NKKDHSDSDD (84 aa). Over residues 63–77 the composition is skewed to basic residues; the sequence is RQARKRRGRKRRSYN. Residues 98–117 show a composition bias toward basic and acidic residues; that stretch reads EPSKDYRENHNNNKKDHSDS. Phosphoserine is present on residues S115, S117, S146, and S195. Disordered regions lie at residues 232–282 and 487–528; these read SEET…GDDE and GRDG…GKSA. Basic and acidic residues predominate over residues 239 to 252; the sequence is NKDKMECEEQKVSD. The 47-residue stretch at 467-513 folds into the G-patch domain; that stretch reads ENNIGNRMLQNMGWTPGSGLGRDGKGISEPIQAMQRPKGLGLGFPLP. A compositionally biased stretch (polar residues) spans 514 to 528; sequence KSTSATTTPNAGKSA.

As to quaternary structure, interacts with DHX15. As to expression, testis.

Its subcellular location is the nucleus speckle. It localises to the nucleus. It is found in the nucleolus. In terms of biological role, enhances the ATPase activity of DHX15 in vitro. This chain is G patch domain-containing protein 2 (GPATCH2), found in Homo sapiens (Human).